Reading from the N-terminus, the 119-residue chain is Protein Wnt-4 (119 aa).

Ser1 carries O-palmitoleoyl serine; by PORCN lipidation. Intrachain disulfides connect Cys69–Cys100 and Cys85–Cys95. Asn86 carries N-linked (GlcNAc...) asparagine glycosylation.

This sequence belongs to the Wnt family. In terms of processing, palmitoleoylation is required for efficient binding to frizzled receptors. Depalmitoleoylation leads to Wnt signaling pathway inhibition.

Its subcellular location is the secreted. The protein localises to the extracellular space. It is found in the extracellular matrix. In terms of biological role, ligand for members of the frizzled family of seven transmembrane receptors. Plays an important role in embryonic development. This is Protein Wnt-4 (WNT-4) from Sceloporus occidentalis (Western fence lizard).